A 294-amino-acid polypeptide reads, in one-letter code: Transcription repressor OFP14 (294 aa).

Residues 49-60 (SFKHRRRSSKTR) show a composition bias toward basic residues. 3 disordered regions span residues 49 to 72 (SFKH…HQDS), 96 to 129 (DDQE…DDDD), and 141 to 185 (AVYD…SRST). Composition is skewed to basic and acidic residues over residues 61–72 (FSKEEPVYHQDS) and 96–117 (DDQE…RESS). Residues 118 to 128 (SDDSDDDDDDD) show a composition bias toward acidic residues. The span at 164–185 (SSEGRPSMETTSTSSERQSRST) shows a compositional bias: low complexity. Residues 195-259 (VLRYTDEPQE…LSAFVDLIIA (65 aa)) enclose the OVATE domain.

In terms of assembly, interacts with KNAT2 and KNAT3. Expressed in roots, rosette and cauline leaves, shoots, stems, flower buds and siliques.

The protein resides in the nucleus. Its function is as follows. Transcriptional repressor that may regulate multiple aspects of plant growth and development through the regulation of BEL1-LIKE (BLH) and KNOX TALE (KNAT) homeodomain transcription factors. This is Transcription repressor OFP14 (OFP14) from Arabidopsis thaliana (Mouse-ear cress).